A 145-amino-acid chain; its full sequence is MIALIQRVSRASVVVDNQTIGAIDKGLLVLLGVEREDNREKMEKLATKVMSYRVFSDENGKMNLNLTQAGGSLLVVSQFTLAADTGRGLRPSFSGAGTPEQALGLYEEFVAFCRAQGVTTETGQFGADMKVELVNDGPVTFNLQV.

Positions 137–138 match the Gly-cisPro motif, important for rejection of L-amino acids motif; sequence GP.

The protein belongs to the DTD family. As to quaternary structure, homodimer.

The protein localises to the cytoplasm. It catalyses the reaction glycyl-tRNA(Ala) + H2O = tRNA(Ala) + glycine + H(+). It carries out the reaction a D-aminoacyl-tRNA + H2O = a tRNA + a D-alpha-amino acid + H(+). An aminoacyl-tRNA editing enzyme that deacylates mischarged D-aminoacyl-tRNAs. Also deacylates mischarged glycyl-tRNA(Ala), protecting cells against glycine mischarging by AlaRS. Acts via tRNA-based rather than protein-based catalysis; rejects L-amino acids rather than detecting D-amino acids in the active site. By recycling D-aminoacyl-tRNA to D-amino acids and free tRNA molecules, this enzyme counteracts the toxicity associated with the formation of D-aminoacyl-tRNA entities in vivo and helps enforce protein L-homochirality. The polypeptide is D-aminoacyl-tRNA deacylase (Shewanella sp. (strain MR-4)).